Consider the following 108-residue polypeptide: Virion membrane protein OPG135 (108 aa).

Positions 1 to 22 are cleaved as a signal peptide; it reads MSCYTAILKSVGGLALFQVANG. Topologically, residues 23 to 45 are intravirion; that stretch reads AIDLCRHFFMYFCEQKLRPNSFW. Residues 46–66 traverse the membrane as a helical segment; that stretch reads FVVVRAIASMIMYLVLGIALL. Topologically, residues 67–83 are virion surface; that stretch reads YISEQDDKKNTNNANTN. Residues 76–108 form a disordered region; it reads NTNNANTNNDSNSNNSNNDKRNESSINSNSSPK. The span at 77–92 shows a compositional bias: low complexity; the sequence is TNNANTNNDSNSNNSN. N-linked (GlcNAc...) asparagine; by host glycosylation is found at Asn84, Asn89, and Asn97. Over residues 99–108 the composition is skewed to polar residues; the sequence is SSINSNSSPK.

It belongs to the oerthopoxvirus OPG135 family.

Its subcellular location is the virion membrane. It is found in the host cytoplasm. Envelope protein. Required for an early step in virion morphogenesis. In Vaccinia virus (strain Western Reserve) (VACV), this protein is Virion membrane protein OPG135 (OPG135).